The primary structure comprises 624 residues: MKGQETRGFQSEVKQLLHLMIHSLYSNKEIFLRELISNASDAADKLRFRALSQPDLYEGDGELRVRVSFDKDNRTLTIADNGIGMNREEVIDHLGTIAKSGTKAFLESMGSDQAKDSQLIGQFGVGFYSAFIVADKVTVRTRAAGDKPENGVFWESAGEGEYTVADITKADRGTEITLHLREGEDDFLNDWRVRSIISKYSDHIALPVEIEKREEKDGETVISWEKINKAQALWTRSKSEVNDDEYKEFYKHIAHDYSDPLTWSHNRVEGKQEYTSLLYIPSQAPWDMWNRDHKHGLKLYVQRVFIMDDAEQFMPNYLRFVRGLIDSNDLPLNVSREILQDSSVTRNLRTALTKRALQMLDKLAKDDAEKYQTFWKQFGLVLKEGPAEDPSNQEAIAKLLRFATTHTDSSAQTVSLEEYVSRMKEGQEKIYYITADSYAAAKSSPHLELLRKKGIEVLLLSDRIDEWMMSYLTEFDGKAFQSVAKADESLDKLADEVDESTKEAEKALEPFVERVKNLLGDRVKEVRLTHRLTDTPAIVTTDADEMSTQMAKLFAAAGQAAPEVKYIFELNPAHQLVKRAADTQDDAQFGEWVELLLDQALLAERGTLEDPNQFIRRMNQLLAS.

The segment at 1–336 (MKGQETRGFQ…SNDLPLNVSR (336 aa)) is a; substrate-binding. Positions 337 to 552 (EILQDSSVTR…ADEMSTQMAK (216 aa)) are b. The interval 553–624 (LFAAAGQAAP…IRRMNQLLAS (72 aa)) is c.

It belongs to the heat shock protein 90 family. Homodimer.

The protein resides in the cytoplasm. Functionally, molecular chaperone. Has ATPase activity. The sequence is that of Chaperone protein HtpG from Klebsiella pneumoniae subsp. pneumoniae (strain ATCC 700721 / MGH 78578).